The chain runs to 587 residues: Phosphomethylpyrimidine synthase (587 aa).

Substrate is bound by residues N218, M247, Y276, H312, 332–334, 373–376, and E412; these read SRG and DGLR. Residue H416 coordinates Zn(2+). Residue Y439 coordinates substrate. A Zn(2+)-binding site is contributed by H480. Residues C560, C563, and C568 each contribute to the [4Fe-4S] cluster site.

This sequence belongs to the ThiC family. [4Fe-4S] cluster is required as a cofactor.

The enzyme catalyses 5-amino-1-(5-phospho-beta-D-ribosyl)imidazole + S-adenosyl-L-methionine = 4-amino-2-methyl-5-(phosphooxymethyl)pyrimidine + CO + 5'-deoxyadenosine + formate + L-methionine + 3 H(+). The protein operates within cofactor biosynthesis; thiamine diphosphate biosynthesis. Its function is as follows. Catalyzes the synthesis of the hydroxymethylpyrimidine phosphate (HMP-P) moiety of thiamine from aminoimidazole ribotide (AIR) in a radical S-adenosyl-L-methionine (SAM)-dependent reaction. The sequence is that of Phosphomethylpyrimidine synthase from Porphyromonas gingivalis (strain ATCC BAA-308 / W83).